The following is a 348-amino-acid chain: Holliday junction branch migration complex subunit RuvB (348 aa).

Positions 1–10 (MAIVSSSSGR) are enriched in low complexity. The interval 1 to 37 (MAIVSSSSGRKPPRRPEALMDPQQAPEEVVSRPEDKL) is disordered. Positions 13-198 (PRRPEALMDP…FGLIQRLEFY (186 aa)) are large ATPase domain (RuvB-L). Residues leucine 37, arginine 38, glycine 79, lysine 82, threonine 83, threonine 84, arginine 188, tyrosine 198, and arginine 235 each contribute to the ATP site. Position 83 (threonine 83) interacts with Mg(2+). A small ATPAse domain (RuvB-S) region spans residues 199 to 271 (GQGDLEAIVE…LVGEALSLHR (73 aa)). The segment at 274 to 348 (HRGLDASDRR…AARSHLAEAA (75 aa)) is head domain (RuvB-H). DNA-binding residues include arginine 329 and arginine 334.

The protein belongs to the RuvB family. Homohexamer. Forms an RuvA(8)-RuvB(12)-Holliday junction (HJ) complex. HJ DNA is sandwiched between 2 RuvA tetramers; dsDNA enters through RuvA and exits via RuvB. An RuvB hexamer assembles on each DNA strand where it exits the tetramer. Each RuvB hexamer is contacted by two RuvA subunits (via domain III) on 2 adjacent RuvB subunits; this complex drives branch migration. In the full resolvosome a probable DNA-RuvA(4)-RuvB(12)-RuvC(2) complex forms which resolves the HJ.

It localises to the cytoplasm. The catalysed reaction is ATP + H2O = ADP + phosphate + H(+). Functionally, the RuvA-RuvB-RuvC complex processes Holliday junction (HJ) DNA during genetic recombination and DNA repair, while the RuvA-RuvB complex plays an important role in the rescue of blocked DNA replication forks via replication fork reversal (RFR). RuvA specifically binds to HJ cruciform DNA, conferring on it an open structure. The RuvB hexamer acts as an ATP-dependent pump, pulling dsDNA into and through the RuvAB complex. RuvB forms 2 homohexamers on either side of HJ DNA bound by 1 or 2 RuvA tetramers; 4 subunits per hexamer contact DNA at a time. Coordinated motions by a converter formed by DNA-disengaged RuvB subunits stimulates ATP hydrolysis and nucleotide exchange. Immobilization of the converter enables RuvB to convert the ATP-contained energy into a lever motion, pulling 2 nucleotides of DNA out of the RuvA tetramer per ATP hydrolyzed, thus driving DNA branch migration. The RuvB motors rotate together with the DNA substrate, which together with the progressing nucleotide cycle form the mechanistic basis for DNA recombination by continuous HJ branch migration. Branch migration allows RuvC to scan DNA until it finds its consensus sequence, where it cleaves and resolves cruciform DNA. This Synechococcus sp. (strain CC9605) protein is Holliday junction branch migration complex subunit RuvB.